The chain runs to 388 residues: ATP phosphoribosyltransferase regulatory subunit (388 aa).

This sequence belongs to the class-II aminoacyl-tRNA synthetase family. HisZ subfamily. As to quaternary structure, heteromultimer composed of HisG and HisZ subunits.

The protein localises to the cytoplasm. It functions in the pathway amino-acid biosynthesis; L-histidine biosynthesis; L-histidine from 5-phospho-alpha-D-ribose 1-diphosphate: step 1/9. Functionally, required for the first step of histidine biosynthesis. May allow the feedback regulation of ATP phosphoribosyltransferase activity by histidine. This chain is ATP phosphoribosyltransferase regulatory subunit, found in Acinetobacter baumannii (strain SDF).